We begin with the raw amino-acid sequence, 97 residues long: Large ribosomal subunit protein bL27 (97 aa).

Positions 1-12 (MIKLNLSNLQHF) are excised as a propeptide. Residues 13–38 (AHKKGGGSTSNGRDSQAKRLGAKAAD) form a disordered region.

This sequence belongs to the bacterial ribosomal protein bL27 family. Post-translationally, the N-terminus is cleaved by ribosomal processing cysteine protease Prp.

In Streptococcus equi subsp. equi (strain 4047), this protein is Large ribosomal subunit protein bL27.